Here is a 156-residue protein sequence, read N- to C-terminus: Small ribosomal subunit protein uS7 (156 aa).

This sequence belongs to the universal ribosomal protein uS7 family. In terms of assembly, part of the 30S ribosomal subunit. Contacts proteins S9 and S11.

In terms of biological role, one of the primary rRNA binding proteins, it binds directly to 16S rRNA where it nucleates assembly of the head domain of the 30S subunit. Is located at the subunit interface close to the decoding center, probably blocks exit of the E-site tRNA. The protein is Small ribosomal subunit protein uS7 of Synechococcus sp. (strain WH7803).